The sequence spans 188 residues: Ribosome-recycling factor (188 aa).

Belongs to the RRF family.

Its subcellular location is the cytoplasm. Responsible for the release of ribosomes from messenger RNA at the termination of protein biosynthesis. May increase the efficiency of translation by recycling ribosomes from one round of translation to another. In Lawsonia intracellularis (strain PHE/MN1-00), this protein is Ribosome-recycling factor.